Here is a 120-residue protein sequence, read N- to C-terminus: Large ribosomal subunit protein uL18 (120 aa).

The interval 1 to 26 (MKLTRRESKQRRHRRVRGKVQGSPER) is disordered. Basic residues predominate over residues 8-18 (SKQRRHRRVRG).

This sequence belongs to the universal ribosomal protein uL18 family. As to quaternary structure, part of the 50S ribosomal subunit; part of the 5S rRNA/L5/L18/L25 subcomplex. Contacts the 5S and 23S rRNAs.

Functionally, this is one of the proteins that bind and probably mediate the attachment of the 5S RNA into the large ribosomal subunit, where it forms part of the central protuberance. This Trichormus variabilis (strain ATCC 29413 / PCC 7937) (Anabaena variabilis) protein is Large ribosomal subunit protein uL18.